A 203-amino-acid polypeptide reads, in one-letter code: Protein S40-6 (203 aa).

The segment at 1–33 (MAKGRKPTTMNRSDRYLGSYTYGDSHGNSVTDE) is disordered.

It belongs to the senescence regulator S40 family.

Its subcellular location is the cytoplasm. The sequence is that of Protein S40-6 from Arabidopsis thaliana (Mouse-ear cress).